Here is a 190-residue protein sequence, read N- to C-terminus: UPF0301 protein DP2218 (190 aa).

Belongs to the UPF0301 (AlgH) family.

This chain is UPF0301 protein DP2218, found in Desulfotalea psychrophila (strain LSv54 / DSM 12343).